Consider the following 214-residue polypeptide: Phosphatidylcholine transfer protein (214 aa).

At Met-1 the chain carries N-acetylmethionine. In terms of domain architecture, START spans 1-212 (MAGPAAHFSD…MVKACQNYHK (212 aa)). 2 residues coordinate a 1,2-diacyl-sn-glycero-3-phosphocholine: Tyr-72 and Arg-78. The residue at position 139 (Ser-139) is a Phosphoserine. Gln-157 provides a ligand contact to a 1,2-diacyl-sn-glycero-3-phosphocholine.

As to quaternary structure, interacts with ACOT13/THEM2.

The protein localises to the cytoplasm. Its function is as follows. Lipid transfer protein that promotes intermembrane transfer of phosphatidylcholines but no other phospholipids. Binds a single lipid molecule. May play a role in hepatocellular selection and transport of phosphatidylcholines during bile formation. The chain is Phosphatidylcholine transfer protein (Pctp) from Rattus norvegicus (Rat).